Consider the following 231-residue polypeptide: Cytochrome c oxidase assembly factor 7 (231 aa).

A2 bears the N-acetylalanine mark. Sel1-like repeat units follow at residues 34 to 66 (PEGCYRLVDYLEGIQKNFDEAAKVLKFNCEKYG), 68 to 104 (GDSCYKLGAYYVTGKGGLTQDLKAASSCFLMACEKPG), 108 to 146 (VESCHNVGLLAHDGQVNEDGQPDLGKARDYYSRACDGGY), 147 to 183 (AASCFNLSAMFLQGAPGFPKDMGLACKYSMKACDLGH), and 184 to 219 (VWACANASRMYKLGDGVDKDEAKAEVLKNRARQLHK).

The protein belongs to the hcp beta-lactamase family. As to quaternary structure, interacts with CHCHD4/MIA40 through transient intermolecular disulfide bonds.

It localises to the mitochondrion intermembrane space. Its function is as follows. Required for assembly of mitochondrial respiratory chain complex I and complex IV. This Mus musculus (Mouse) protein is Cytochrome c oxidase assembly factor 7 (Coa7).